The sequence spans 440 residues: Tetratricopeptide repeat protein 5 (440 aa).

5 TPR repeats span residues Glu7–Val61, Ala68–Leu98, Val103–Leu130, Lys136–Met174, and Gly179–Val216. Positions Leu13–Tyr24 match the Nuclear export signal motif. Ser203 bears the Phosphoserine; by ATM mark. Phosphoserine; by CHEK2 is present on Ser221. Residues Pro224 to Leu253 form a TPR 6 repeat. The tract at residues Lys285–Lys287 is mediates interaction with 28S rRNA of ribosome-coding tubulin.

Interacts with JMY and p300/EP300; the interaction occurs in the nucleus and augments the association between JMY and p300/EP300 in response to DNA damage. Forms a complex with HSF1 and p300/EP300; these interactions augment chromatin-bound HSF1 and p300/EP300 histone acetyltransferase activity, resulting in enhanced heat-shock-responsive transcription. Interacts with PRMT5; the interaction is DNA damage-dependent and promotes PRMT5 interaction with p53/TP53 and subsequent methylation. Interacts with JMY; the interaction occurs in the cytoplasm and results in the inhibition of JYM's nucleation activity. Interacts with ribosome-coding tubulin (via 60S subunit 28S rRNA and protein uL24/RPL26) and the N-terminal of nascent tubulin polypeptide (via alpha-tubulin MREC motif and beta-tubulin MREI motif); these interactions result in tubulin mRNA-targeted degradation. Interacts with ATP5F1B; the interaction occurs in the mitochondria and results in ATP production decrease. Interacts with p53/TP53; the interaction occurs in the mitochondria and results in increased apoptosis. In terms of processing, phosphorylation by ATM kinase induces nuclear accumulation while interfering with nuclear export, and phosphorylation by CHEK2 kinase enhances nuclear stability.

The protein localises to the nucleus. It is found in the cytoplasm. Its subcellular location is the cytoplasmic vesicle. It localises to the mitochondrion matrix. Its function is as follows. Cofactor involved in the regulation of various cellular mechanisms such as actin regulation, autophagy, chromatin regulation and DNA repair. In non-stress conditions, interacts with cofactor JMY in the cytoplasm which prevents JMY's actin nucleation activity and ability to activate the Arp2/3 complex. Acts as a negative regulator of nutrient stress-induced autophagy by preventing JMY's interaction with MAP1LC3B, thereby preventing autophagosome formation. Involves in tubulin autoregulation by promoting its degradation in response to excess soluble tubulin. To do so, associates with the active ribosome near the ribosome exit tunnel and with nascent tubulin polypeptides early during their translation, triggering tubulin mRNA-targeted degradation. Following DNA damage, phosphorylated by DNA damage responsive protein kinases ATM and CHEK2, leading to its nuclear accumulation and stability. Nuclear TTC5/STRAP promotes the assembly of a stress-responsive p53/TP53 coactivator complex, which includes the coactivators JMY and p300, thereby increasing p53/TP53-dependent transcription and apoptosis. Also recruits arginine methyltransferase PRMT5 to p53/TP53 when DNA is damaged, allowing PRMT5 to methylate p53/TP53. In DNA stress conditions, also prevents p53/TP53 degradation by E3 ubiquitin ligase MDM2. Upon heat-shock stress, forms a chromatin-associated complex with heat-shock factor 1 HSF1 and p300/EP300 to stimulate heat-shock-responsive transcription, thereby increasing cell survival. Mitochondrial TTC5/STRAP interacts with ATP synthase subunit beta ATP5F1B which decreased ATP synthase activity and lowers mitochondrial ATP production, thereby regulating cellular respiration and mitochondrial-dependent apoptosis. Mitochondrial TTC5/STRAP also regulates p53/TP53-mediated apoptosis. The polypeptide is Tetratricopeptide repeat protein 5 (Homo sapiens (Human)).